We begin with the raw amino-acid sequence, 204 residues long: Large ribosomal subunit protein eL15 (204 aa).

The protein belongs to the eukaryotic ribosomal protein eL15 family.

The sequence is that of Large ribosomal subunit protein eL15 (RPL15) from Tetrahymena thermophila (strain SB210).